Reading from the N-terminus, the 340-residue chain is 4-amino-5-hydroxymethyl-2-methylpyrimidine phosphate synthase THI11 (340 aa).

Lysine 62 carries the N6-(pyridoxal phosphate)lysine modification. Histidine 66 is an active-site residue. 115 to 118 contributes to the pyridoxal 5'-phosphate binding site; that stretch reads GEFG. The CCCFC; essential for catalytic activity, may be the site of iron coordination signature appears at 195-199; sequence CCCFC.

Belongs to the NMT1/THI5 family. In terms of assembly, homodimer. Requires Fe cation as cofactor.

The enzyme catalyses N(6)-(pyridoxal phosphate)-L-lysyl-[4-amino-5-hydroxymethyl-2-methylpyrimidine phosphate synthase] + L-histidyl-[4-amino-5-hydroxymethyl-2-methylpyrimidine phosphate synthase] + 2 Fe(3+) + 4 H2O = L-lysyl-[4-amino-5-hydroxymethyl-2-methylpyrimidine phosphate synthase] + (2S)-2-amino-5-hydroxy-4-oxopentanoyl-[4-amino-5-hydroxymethyl-2-methylpyrimidine phosphate synthase] + 4-amino-2-methyl-5-(phosphooxymethyl)pyrimidine + 3-oxopropanoate + 2 Fe(2+) + 2 H(+). The protein operates within cofactor biosynthesis; thiamine diphosphate biosynthesis. Functionally, responsible for the formation of the pyrimidine heterocycle in the thiamine biosynthesis pathway. Catalyzes the formation of hydroxymethylpyrimidine phosphate (HMP-P) from histidine and pyridoxal phosphate (PLP). The protein uses PLP and the active site histidine to form HMP-P, generating an inactive enzyme. The enzyme can only undergo a single turnover, which suggests it is a suicide enzyme. This chain is 4-amino-5-hydroxymethyl-2-methylpyrimidine phosphate synthase THI11, found in Saccharomyces cerevisiae (strain ATCC 204508 / S288c) (Baker's yeast).